We begin with the raw amino-acid sequence, 230 residues long: MITQKGKEHLVKDKQKSNIYLRILSGIVLVPLFVIAILWCKPLFYILMILVGTGMLSEWYNMTYSSIPDLLIGLIIIPIPISLLIFLSMEDTNRWLIMLYFCIMWSVDTFAMIGGKTFKGAKLAPKLSPKKTWSGLVTGVLSAGLVAVLVSFIPNFHIENYYFSNKIYLFIISCILALIAQLSDLFISYFKRKFNIKDSGHIIPGHGGVLDRFDSIILTTLILFLMKIYL.

Transmembrane regions (helical) follow at residues 33 to 53 (FVIA…LVGT), 67 to 87 (IPDL…LIFL), 95 to 115 (WLIM…MIGG), 133 to 153 (WSGL…VSFI), 167 to 187 (IYLF…DLFI), and 206 to 226 (HGGV…LFLM).

This sequence belongs to the CDS family.

The protein localises to the cell membrane. It carries out the reaction a 1,2-diacyl-sn-glycero-3-phosphate + CTP + H(+) = a CDP-1,2-diacyl-sn-glycerol + diphosphate. Its pathway is phospholipid metabolism; CDP-diacylglycerol biosynthesis; CDP-diacylglycerol from sn-glycerol 3-phosphate: step 3/3. This is Phosphatidate cytidylyltransferase (cdsA) from Rickettsia conorii (strain ATCC VR-613 / Malish 7).